Consider the following 1338-residue polypeptide: Thioester-containing protein 1 allele R1 (1338 aa).

The N-terminal stretch at 1 to 21 is a signal peptide; sequence MWQFIRSRILTVIIFIGAAHG. 5 N-linked (GlcNAc...) asparagine glycosylation sites follow: Asn68, Asn199, Asn242, Asn312, and Asn481. The segment at 580–609 is may contain the cleavage site; the sequence is ENEFDIFHSLGLFARTLDDILFDSANEKTG. 3 N-linked (GlcNAc...) asparagine glycosylation sites follow: Asn637, Asn728, and Asn813. The segment at residues 859–862 is a cross-link (isoglutamyl cysteine thioester (Cys-Gln)); that stretch reads CGEQ. N-linked (GlcNAc...) asparagine glycosylation is found at Asn919 and Asn1065. 3 disulfide bridges follow: Cys1217–Cys1283, Cys1326–Cys1338, and Cys1329–Cys1334.

As to quaternary structure, heterodimer of a TEP1-N chain and an TEP1-C chain non-covalently linked. Forms a complex composed of TEP1-N and TEP1-C heterodimer, LRIM1 and APL1C; the interaction stabilizes TEP1-N and TEP1-C heterodimer, prevents its binding to tissues while circulating in the hemolymph and protects the thioester bond from hydrolysis. Mature TEP1 and to a lesser extent full-length TEP1 interact with SPCLIP1; the interaction is induced by microbial infection. In terms of processing, in the hemolymph, the full-length protein is cleaved by an unknow protease into a 75kDa N-terminal (TEP1-N) chain and an 80kDa C-terminal (TEP1-C) chain which remain non-covalently linked. The TEP1-C chain contains the thioester bond which covalently binds to the pathogen surface. Cleavage is induced by bacterial infection or aseptic wound injury. During embryonic and pupal development, the cleaved form is the predominant form. N-glycosylated.

The protein localises to the secreted. In terms of biological role, plays an essential role in the innate immune response against bacteria, fungi and protozoa infection. After proteolytic cleavage, the protein C-terminus binds covalently through a thioester bond to the pathogen surface resulting in pathogen clearance either by melanization or lysis. Initiate the recruitment and activation of a cascade of proteases, mostly of CLIP-domain serine proteases, which leads to the proteolytic cleavage of the prophenoloxidase (PPO) into active phenoloxidase (PO), the rate-limiting enzyme in melanin biosynthesis. In response to parasite P.berghei-mediated infection, binds to and mediates killing of ookinetes, as they egress from midgut epithelial cells into the basal labyrinth, by both lysis and melanization. During bacterial infection, binds to both Gram-positive and Gram-negative bacteria but only promotes phagocytosis of Gram-negative bacteria. Promotes the accumulation of SPCLIP1 onto the surface of P.berghei ookinetes and bacterium E.coli which leads to the melanization of the pathogen. Recruits CLIPA2 to bacteria surface. In response to bacterial infection, required for periostial hemocyte aggregation, but not for the aggregation of sessile hemocytes in non-periostial regions. During the late stage of fungus B.bassiana-mediated infection, required for the initiation of hyphae melanization by binding to the surface of hyphae and recruiting prophenoloxidase PPO to them. Plays a role in male fertility by binding to defective sperm cells and promoting their removal during spermatogenesis. Binds to and mediates killing of parasite P.bergei ookinetes by lysis and melanization. Its function is as follows. Binds covalently through a thioester bond to the pathogen surface resulting in pathogen clearance. This is Thioester-containing protein 1 allele R1 from Anopheles gambiae (African malaria mosquito).